A 125-amino-acid chain; its full sequence is Linear element protein rec27 (125 aa).

The stretch at K45–Q104 forms a coiled coil.

As to quaternary structure, component of linear elements (LinEs), which are similar to synaptonemal complexes, at least composed of rec27, rec25, rec10 and mug20.

Its subcellular location is the cytoplasm. The protein resides in the nucleus. It is found in the chromosome. During meiotic DNA recombination, binds to and activates DNA double-strand break (DSB) hotspot sites. The polypeptide is Linear element protein rec27 (Schizosaccharomyces pombe (strain 972 / ATCC 24843) (Fission yeast)).